The following is a 130-amino-acid chain: Mitochondrial import protein 1 (130 aa).

Positions 1–41 (MSAEEISNPLAESGVTISSDSEQYSAPESASPQSPSSSSPA) are disordered. Over residues 15 to 24 (VTISSDSEQY) the composition is skewed to polar residues. A compositionally biased stretch (low complexity) spans 25–41 (SAPESASPQSPSSSSPA).

It belongs to the MIM1 family.

The protein resides in the mitochondrion outer membrane. In terms of biological role, required for the assembly of the TOM (translocase of outer membrane) receptor complex, which is responsible for the recognition and translocation of cytosolically synthesized mitochondrial preproteins. The sequence is that of Mitochondrial import protein 1 from Neurospora crassa (strain ATCC 24698 / 74-OR23-1A / CBS 708.71 / DSM 1257 / FGSC 987).